Consider the following 537-residue polypeptide: ATP-dependent 6-phosphofructokinase 5, chloroplastic (537 aa).

The transit peptide at 1–52 (MDALSQAISSGISVPYKNNSSSLVPSHGLTSLILRKSRSPVNPSSRSRVSVR) directs the protein to the chloroplast. Positions 35-64 (RKSRSPVNPSSRSRVSVRASEIQHSKTSAS) are disordered. Positions 39–54 (SPVNPSSRSRVSVRAS) are enriched in low complexity. A Phosphoserine modification is found at serine 147. Residues glycine 189, 253–254 (RG), and 278–281 (GNGT) each bind ATP. Asparagine 279 serves as a coordination point for Mg(2+). Substrate is bound by residues 307–309 (TID), 352–354 (MGR), glutamate 408, and 460–463 (YMIR). The active-site Proton acceptor is the aspartate 309.

This sequence belongs to the phosphofructokinase type A (PFKA) family. PPi-dependent PFK group II subfamily. Atypical ATP-dependent clade 'X' sub-subfamily. Homotetramer. It depends on Mg(2+) as a cofactor. As to expression, expressed in roots, leaves, stems and flowers.

It localises to the plastid. It is found in the chloroplast. It carries out the reaction beta-D-fructose 6-phosphate + ATP = beta-D-fructose 1,6-bisphosphate + ADP + H(+). It participates in carbohydrate degradation; glycolysis; D-glyceraldehyde 3-phosphate and glycerone phosphate from D-glucose: step 3/4. Its activity is regulated as follows. Allosterically activated by AMP. In terms of biological role, catalyzes the phosphorylation of D-fructose 6-phosphate to fructose 1,6-bisphosphate by ATP, the first committing step of glycolysis. The protein is ATP-dependent 6-phosphofructokinase 5, chloroplastic of Arabidopsis thaliana (Mouse-ear cress).